The primary structure comprises 123 residues: uncharacterized protein (123 aa).

This is an uncharacterized protein from Bacillus subtilis (strain 168).